Here is a 171-residue protein sequence, read N- to C-terminus: ATP synthase subunit delta (171 aa).

The protein belongs to the ATPase delta chain family. As to quaternary structure, F-type ATPases have 2 components, F(1) - the catalytic core - and F(0) - the membrane proton channel. F(1) has five subunits: alpha(3), beta(3), gamma(1), delta(1), epsilon(1). F(0) has three main subunits: a(1), b(2) and c(10-14). The alpha and beta chains form an alternating ring which encloses part of the gamma chain. F(1) is attached to F(0) by a central stalk formed by the gamma and epsilon chains, while a peripheral stalk is formed by the delta and b chains.

The protein localises to the cell membrane. F(1)F(0) ATP synthase produces ATP from ADP in the presence of a proton or sodium gradient. F-type ATPases consist of two structural domains, F(1) containing the extramembraneous catalytic core and F(0) containing the membrane proton channel, linked together by a central stalk and a peripheral stalk. During catalysis, ATP synthesis in the catalytic domain of F(1) is coupled via a rotary mechanism of the central stalk subunits to proton translocation. In terms of biological role, this protein is part of the stalk that links CF(0) to CF(1). It either transmits conformational changes from CF(0) to CF(1) or is implicated in proton conduction. In Acholeplasma laidlawii (strain PG-8A), this protein is ATP synthase subunit delta.